The primary structure comprises 425 residues: Serine--tRNA ligase (425 aa).

Residues 110–134 (NLPSADAPEGKSEADNVEVKRWGEP) form a disordered region. Over residues 117-134 (PEGKSEADNVEVKRWGEP) the composition is skewed to basic and acidic residues. 233–235 (TAE) is a binding site for L-serine. An ATP-binding site is contributed by 264-266 (RRE). Position 287 (Glu287) interacts with L-serine. Position 351–354 (351–354 (EISS)) interacts with ATP. Ser385 is a binding site for L-serine.

This sequence belongs to the class-II aminoacyl-tRNA synthetase family. Type-1 seryl-tRNA synthetase subfamily. Homodimer. The tRNA molecule binds across the dimer.

It is found in the cytoplasm. It carries out the reaction tRNA(Ser) + L-serine + ATP = L-seryl-tRNA(Ser) + AMP + diphosphate + H(+). It catalyses the reaction tRNA(Sec) + L-serine + ATP = L-seryl-tRNA(Sec) + AMP + diphosphate + H(+). The protein operates within aminoacyl-tRNA biosynthesis; selenocysteinyl-tRNA(Sec) biosynthesis; L-seryl-tRNA(Sec) from L-serine and tRNA(Sec): step 1/1. In terms of biological role, catalyzes the attachment of serine to tRNA(Ser). Is also able to aminoacylate tRNA(Sec) with serine, to form the misacylated tRNA L-seryl-tRNA(Sec), which will be further converted into selenocysteinyl-tRNA(Sec). This Synechococcus sp. (strain RCC307) protein is Serine--tRNA ligase.